The primary structure comprises 230 residues: ATP synthase subunit a (230 aa).

5 helical membrane-spanning segments follow: residues 17-37, 78-98, 107-127, 165-187, and 198-218; these read LPIT…FIMA, IFPF…IGVI, DLSV…WFGI, LFGN…GFLV, and EAII…AGGI.

This sequence belongs to the ATPase A chain family. In terms of assembly, F-type ATPases have 2 components, CF(1) - the catalytic core - and CF(0) - the membrane proton channel. CF(1) has five subunits: alpha(3), beta(3), gamma(1), delta(1), epsilon(1). CF(0) has three main subunits: a(1), b(2) and c(9-12). The alpha and beta chains form an alternating ring which encloses part of the gamma chain. CF(1) is attached to CF(0) by a central stalk formed by the gamma and epsilon chains, while a peripheral stalk is formed by the delta and b chains.

The protein resides in the cell inner membrane. Its function is as follows. Key component of the proton channel; it plays a direct role in the translocation of protons across the membrane. This is ATP synthase subunit a from Legionella pneumophila (strain Paris).